The sequence spans 1040 residues: DNA cross-link repair 1A protein (1040 aa).

Residues 1–190 are nuclear localization region; it reads MLEDISEEDI…RAGDHPFSSP (190 aa). The segment at 15-76 is disordered; that stretch reads SKRKPKRVDP…LGNAGCQTSV (62 aa). Over residues 53–65 the composition is skewed to basic and acidic residues; the sequence is RAAEAKEVKDHEV. The UBZ4-type zinc-finger motif lies at 119–149; it reads DGYCPNCQMPFSSLIGQTPRWHVFECLDSPP. Residues C122, C125, H140, and C144 each coordinate Zn(2+). Glycyl lysine isopeptide (Lys-Gly) (interchain with G-Cter in SUMO2) cross-links involve residues K202, K236, K269, K353, K361, K429, K488, K508, K517, K533, and K536. The nuclear focus formation stretch occupies residues 396–614; the sequence is LPYDLACTGG…KSLSDLEFDA (219 aa). Disordered stretches follow at residues 582–602 and 623–651; these read GINL…CKRK and SVEL…ACQK. S590 bears the Phosphoserine mark. Residues K668, K670, and K674 each participate in a glycyl lysine isopeptide (Lys-Gly) (interchain with G-Cter in SUMO2) cross-link.

This sequence belongs to the DNA repair metallo-beta-lactamase (DRMBL) family. In terms of assembly, binds constitutively to TP53BP1. Binds CDC27, which is itself a component of the anaphase promoting complex (APC). Binds PIAS1. Expressed in brain, heart, kidney, liver, pancreas, placenta and skeletal muscle.

It is found in the nucleus. It carries out the reaction a beta-lactam + H2O = a substituted beta-amino acid. With respect to regulation, beta-lactamase activity is inhibited by sulbactam. Functionally, may be required for DNA interstrand cross-link repair. Also required for checkpoint mediated cell cycle arrest in early prophase in response to mitotic spindle poisons. Possesses beta-lactamase activity, catalyzing the hydrolysis of penicillin G and nitrocefin. Exhibits no activity towards other beta-lactam antibiotic classes including cephalosporins (cefotaxime) and carbapenems (imipenem). In Homo sapiens (Human), this protein is DNA cross-link repair 1A protein (DCLRE1A).